The primary structure comprises 625 residues: Chaperone protein DnaK (625 aa).

Threonine 197 is modified (phosphothreonine; by autocatalysis). A disordered region spans residues 598 to 625 (AYAKEQGGTQQGTDTKKKDDDVIDAEVE).

It belongs to the heat shock protein 70 family.

In terms of biological role, acts as a chaperone. The chain is Chaperone protein DnaK from Helicobacter hepaticus (strain ATCC 51449 / 3B1).